Here is a 632-residue protein sequence, read N- to C-terminus: Putative ankyrin repeat protein L767 (632 aa).

ANK repeat units follow at residues 61–97, 228–250, 251–282, 345–374, and 517–546; these read YGNT…DYEF, FDNE…YIVE, KGFY…NLTD, NLDI…NVDD, and NSIE…NDTD.

The chain is Putative ankyrin repeat protein L767 from Acanthamoeba polyphaga mimivirus (APMV).